The following is a 313-amino-acid chain: Porphobilinogen deaminase (313 aa).

C242 bears the S-(dipyrrolylmethanemethyl)cysteine mark.

This sequence belongs to the HMBS family. Monomer. Dipyrromethane is required as a cofactor.

It carries out the reaction 4 porphobilinogen + H2O = hydroxymethylbilane + 4 NH4(+). It functions in the pathway porphyrin-containing compound metabolism; protoporphyrin-IX biosynthesis; coproporphyrinogen-III from 5-aminolevulinate: step 2/4. Tetrapolymerization of the monopyrrole PBG into the hydroxymethylbilane pre-uroporphyrinogen in several discrete steps. This is Porphobilinogen deaminase from Marinobacter nauticus (strain ATCC 700491 / DSM 11845 / VT8) (Marinobacter aquaeolei).